The chain runs to 345 residues: S-adenosylmethionine:tRNA ribosyltransferase-isomerase (345 aa).

It belongs to the QueA family. In terms of assembly, monomer.

The protein localises to the cytoplasm. It carries out the reaction 7-aminomethyl-7-carbaguanosine(34) in tRNA + S-adenosyl-L-methionine = epoxyqueuosine(34) in tRNA + adenine + L-methionine + 2 H(+). The protein operates within tRNA modification; tRNA-queuosine biosynthesis. Functionally, transfers and isomerizes the ribose moiety from AdoMet to the 7-aminomethyl group of 7-deazaguanine (preQ1-tRNA) to give epoxyqueuosine (oQ-tRNA). The chain is S-adenosylmethionine:tRNA ribosyltransferase-isomerase from Thermus thermophilus (strain ATCC BAA-163 / DSM 7039 / HB27).